A 250-amino-acid polypeptide reads, in one-letter code: tRNA (guanine-N(1)-)-methyltransferase (250 aa).

Residues G108 and 127 to 132 (LGDFVL) contribute to the S-adenosyl-L-methionine site.

The protein belongs to the RNA methyltransferase TrmD family. Homodimer.

The protein localises to the cytoplasm. It carries out the reaction guanosine(37) in tRNA + S-adenosyl-L-methionine = N(1)-methylguanosine(37) in tRNA + S-adenosyl-L-homocysteine + H(+). Its function is as follows. Specifically methylates guanosine-37 in various tRNAs. The protein is tRNA (guanine-N(1)-)-methyltransferase of Streptococcus agalactiae serotype Ia (strain ATCC 27591 / A909 / CDC SS700).